Reading from the N-terminus, the 209-residue chain is Na(+)-translocating NADH-quinone reductase subunit D (209 aa).

Helical transmembrane passes span 42–62 (LVMT…ISLI), 66–86 (IPGS…VIVV), 103–123 (VFVG…AYAM), 131–151 (FMDG…VGFL), and 178–198 (NGLF…IWGL).

The protein belongs to the NqrDE/RnfAE family. In terms of assembly, composed of six subunits; NqrA, NqrB, NqrC, NqrD, NqrE and NqrF.

The protein localises to the cell inner membrane. It catalyses the reaction a ubiquinone + n Na(+)(in) + NADH + H(+) = a ubiquinol + n Na(+)(out) + NAD(+). NQR complex catalyzes the reduction of ubiquinone-1 to ubiquinol by two successive reactions, coupled with the transport of Na(+) ions from the cytoplasm to the periplasm. NqrA to NqrE are probably involved in the second step, the conversion of ubisemiquinone to ubiquinol. The chain is Na(+)-translocating NADH-quinone reductase subunit D from Proteus mirabilis (strain HI4320).